Reading from the N-terminus, the 449-residue chain is Hyaluronidase (449 aa).

A signal peptide spans 1–23 (MYHLWIKCLAAWIFLKRFNGVHV). 2 disulfide bridges follow: Cys47–Cys340 and Cys211–Cys227. Asn67 and Asn103 each carry an N-linked (GlcNAc...) asparagine glycan. The active-site Proton donor is Glu135. The N-linked (GlcNAc...) asparagine glycan is linked to Asn153. N-linked (GlcNAc...) asparagine glycosylation is present at Asn357. 3 disulfides stabilise this stretch: Cys365-Cys376, Cys370-Cys427, and Cys429-Cys438. Asn401 carries N-linked (GlcNAc...) asparagine glycosylation. The 12-residue stretch at 427 to 438 (CQCYQGWQGLYC) folds into the EGF-like domain.

Belongs to the glycosyl hydrolase 56 family. As to quaternary structure, monomer. As to expression, expressed by the venom gland.

The protein localises to the secreted. It catalyses the reaction Random hydrolysis of (1-&gt;4)-linkages between N-acetyl-beta-D-glucosamine and D-glucuronate residues in hyaluronate.. In terms of biological role, snake venom endo-hyaluronidase that degrades hyaluronan to smaller oligosaccharide fragments. In venom, it is not toxic by itself, but increases the diffusion of other venom proteins by degrading the extracellular matrix. In addition, it displays antiedematogenic activity. The polypeptide is Hyaluronidase (Echis ocellatus (Ocellated saw-scaled viper)).